A 644-amino-acid polypeptide reads, in one-letter code: Low affinity sulfate transporter 3 (644 aa).

The span at 1-19 (MSSLGTEQFSERSQWVLNS) shows a compositional bias: polar residues. Residues 1 to 20 (MSSLGTEQFSERSQWVLNSP) are disordered. 13 consecutive transmembrane segments (helical) span residues 50–70 (AVSF…YSAT), 76–96 (LLSG…YANL), 99–119 (LDPQ…ALMG), 124–144 (IAIG…PKVI), 156–176 (LVFT…VLRL), 179–199 (LVDF…AIVI), 242–262 (PLNF…RFIG), 268–288 (FFWL…LIVF), 328–348 (IGLI…RSFA), 394–414 (CKTA…LELF), 418–438 (LYYT…PGLI), 455–475 (LACL…GLLI), and 518–538 (PGIL…AGFV). The 125-residue stretch at 511-635 (YPMAVTTPGI…LTVAEAVDAC (125 aa)) folds into the STAS domain.

This sequence belongs to the SLC26A/SulP transporter (TC 2.A.53) family.

The protein localises to the membrane. Low-affinity H(+)/sulfate cotransporter which may be involved in the internal transport of sulfate between cellular or subcellular compartments within the plant. The protein is Low affinity sulfate transporter 3 (ST3) of Stylosanthes hamata (Caribbean stylo).